A 200-amino-acid chain; its full sequence is Recombination protein RecR (200 aa).

The C4-type zinc-finger motif lies at 58-73 (CQVCGNMDTENICGIC). One can recognise a Toprim domain in the interval 81 to 176 (SVIAIVETVA…KISRLASGIP (96 aa)).

Belongs to the RecR family.

Its function is as follows. May play a role in DNA repair. It seems to be involved in an RecBC-independent recombinational process of DNA repair. It may act with RecF and RecO. The chain is Recombination protein RecR from Rickettsia bellii (strain OSU 85-389).